The primary structure comprises 909 residues: ABC transporter B family member 1 (909 aa).

Positions 1–36 (MTKKNFNDEENESLLETYNKQQQKQSISTTNRSDQK) are disordered. The segment covering 14–36 (LLETYNKQQQKQSISTTNRSDQK) has biased composition (polar residues). The chain crosses the membrane as a helical span at residues 85 to 105 (LFIQIVSLVILAGYLISINAL). The span at 125–134 (TDSGSVSPTS) shows a compositional bias: low complexity. Residues 125–147 (TDSGSVSPTSTPSPTPTPTPSPT) are disordered. The segment covering 135 to 145 (TPSPTPTPTPS) has biased composition (pro residues). 8 consecutive transmembrane segments (helical) span residues 182 to 202 (FSTFDILLISYFISLFWLLLI), 206 to 226 (SFIYHTISYIITIIALIYNVI), 275 to 295 (IIIVIVLVGIPLMVLFLVLHI), 347 to 367 (LPIILAAMVALVFSSLTSLAM), 392 to 412 (LALVVIFVIGSISTLVRSWLF), 480 to 500 (VILLFITNWRLTLLMLGIVPV), 572 to 592 (GVFSGIVFLVAQLAIVLIVYV), and 607 to 627 (LTSFLLYTLSLAMSLAFISSL). The 284-residue stretch at 350–633 (ILAAMVALVF…ISSLMTDFLK (284 aa)) folds into the ABC transmembrane type-1 domain. The region spanning 666–902 (IELKDVEFSY…TDGIYHNLVK (237 aa)) is the ABC transporter domain. 701 to 708 (GPSGGGKS) is an ATP binding site.

It belongs to the ABC transporter superfamily. ABCB family.

It is found in the membrane. The sequence is that of ABC transporter B family member 1 (abcB1) from Dictyostelium discoideum (Social amoeba).